Consider the following 477-residue polypeptide: Glycogen synthase (477 aa).

An ADP-alpha-D-glucose-binding site is contributed by Lys-15.

It belongs to the glycosyltransferase 1 family. Bacterial/plant glycogen synthase subfamily.

The enzyme catalyses [(1-&gt;4)-alpha-D-glucosyl](n) + ADP-alpha-D-glucose = [(1-&gt;4)-alpha-D-glucosyl](n+1) + ADP + H(+). The protein operates within glycan biosynthesis; glycogen biosynthesis. Synthesizes alpha-1,4-glucan chains using ADP-glucose. The polypeptide is Glycogen synthase (Halorhodospira halophila (strain DSM 244 / SL1) (Ectothiorhodospira halophila (strain DSM 244 / SL1))).